A 393-amino-acid chain; its full sequence is NAD(P)H-quinone oxidoreductase subunit H, chloroplastic (393 aa).

This sequence belongs to the complex I 49 kDa subunit family. In terms of assembly, NDH is composed of at least 16 different subunits, 5 of which are encoded in the nucleus.

The protein localises to the plastid. Its subcellular location is the chloroplast thylakoid membrane. The catalysed reaction is a plastoquinone + NADH + (n+1) H(+)(in) = a plastoquinol + NAD(+) + n H(+)(out). It carries out the reaction a plastoquinone + NADPH + (n+1) H(+)(in) = a plastoquinol + NADP(+) + n H(+)(out). In terms of biological role, NDH shuttles electrons from NAD(P)H:plastoquinone, via FMN and iron-sulfur (Fe-S) centers, to quinones in the photosynthetic chain and possibly in a chloroplast respiratory chain. The immediate electron acceptor for the enzyme in this species is believed to be plastoquinone. Couples the redox reaction to proton translocation, and thus conserves the redox energy in a proton gradient. In Nandina domestica (Heavenly bamboo), this protein is NAD(P)H-quinone oxidoreductase subunit H, chloroplastic.